The chain runs to 72 residues: Translation initiation factor IF-1 (72 aa).

The S1-like domain maps to Met1–Arg72.

Belongs to the IF-1 family. Component of the 30S ribosomal translation pre-initiation complex which assembles on the 30S ribosome in the order IF-2 and IF-3, IF-1 and N-formylmethionyl-tRNA(fMet); mRNA recruitment can occur at any time during PIC assembly.

It is found in the cytoplasm. Its function is as follows. One of the essential components for the initiation of protein synthesis. Stabilizes the binding of IF-2 and IF-3 on the 30S subunit to which N-formylmethionyl-tRNA(fMet) subsequently binds. Helps modulate mRNA selection, yielding the 30S pre-initiation complex (PIC). Upon addition of the 50S ribosomal subunit IF-1, IF-2 and IF-3 are released leaving the mature 70S translation initiation complex. The protein is Translation initiation factor IF-1 of Sodalis glossinidius (strain morsitans).